Consider the following 41-residue polypeptide: MAVPKKRHSKRICKIKFYSWKSKFLKKVQFIINQKSIIKNK.

It belongs to the bacterial ribosomal protein bL32 family.

It localises to the plastid. The protein is Large ribosomal subunit protein bL32c (rpl32) of Helicosporidium sp. subsp. Simulium jonesii (Green alga).